A 448-amino-acid chain; its full sequence is Phosphoglucosamine mutase (448 aa).

The active-site Phosphoserine intermediate is S100. S100, D240, D242, and D244 together coordinate Mg(2+). At S100 the chain carries Phosphoserine.

It belongs to the phosphohexose mutase family. Requires Mg(2+) as cofactor. In terms of processing, activated by phosphorylation.

The catalysed reaction is alpha-D-glucosamine 1-phosphate = D-glucosamine 6-phosphate. Its function is as follows. Catalyzes the conversion of glucosamine-6-phosphate to glucosamine-1-phosphate. This is Phosphoglucosamine mutase from Bacillus licheniformis (strain ATCC 14580 / DSM 13 / JCM 2505 / CCUG 7422 / NBRC 12200 / NCIMB 9375 / NCTC 10341 / NRRL NRS-1264 / Gibson 46).